The sequence spans 173 residues: MPGNIVLIGFMGSGKTTVGRLLARDLGWSFLDTDTMVEERLGLPVKEIFAREGEEFFREVEKEAVARVATARQAVIATGGGAVLCGVNVKLLREGNKVVWLQVRPETALKRAGLDDSRPLLQGREPRDIAALLRRREPYYAFADIYIDTDGKEAAAVAREIKEALKAWLESLT.

Residue 12 to 17 (GSGKTT) coordinates ATP. Residue Thr16 coordinates Mg(2+). Substrate contacts are provided by Asp34, Arg58, and Gly80. Arg118 serves as a coordination point for ATP. A substrate-binding site is contributed by Arg136.

The protein belongs to the shikimate kinase family. Monomer. It depends on Mg(2+) as a cofactor.

It localises to the cytoplasm. The enzyme catalyses shikimate + ATP = 3-phosphoshikimate + ADP + H(+). It functions in the pathway metabolic intermediate biosynthesis; chorismate biosynthesis; chorismate from D-erythrose 4-phosphate and phosphoenolpyruvate: step 5/7. In terms of biological role, catalyzes the specific phosphorylation of the 3-hydroxyl group of shikimic acid using ATP as a cosubstrate. This chain is Shikimate kinase, found in Moorella thermoacetica (strain ATCC 39073 / JCM 9320).